Consider the following 239-residue polypeptide: Probable transcriptional regulatory protein Bcer98_0465 (239 aa).

The protein belongs to the TACO1 family. YeeN subfamily.

It localises to the cytoplasm. The chain is Probable transcriptional regulatory protein Bcer98_0465 from Bacillus cytotoxicus (strain DSM 22905 / CIP 110041 / 391-98 / NVH 391-98).